Reading from the N-terminus, the 62-residue chain is Large ribosomal subunit protein bL28 (62 aa).

The segment at 1-24 is disordered; it reads MGKQCFVTGRKASTGNNRSHALNS. Polar residues predominate over residues 11–24; the sequence is KASTGNNRSHALNS.

This sequence belongs to the bacterial ribosomal protein bL28 family.

This Staphylococcus saprophyticus subsp. saprophyticus (strain ATCC 15305 / DSM 20229 / NCIMB 8711 / NCTC 7292 / S-41) protein is Large ribosomal subunit protein bL28.